Consider the following 98-residue polypeptide: Defensin-B (98 aa).

Positions 1 to 20 are cleaved as a signal peptide; that stretch reads MKSITVICFLALCTVAITSA. A propeptide spanning residues 21–58 is cleaved from the precursor; it reads YPQEPVLADEARPFANSLFDELPEETYQAAVENFRLKR. Intrachain disulfides connect C61–C88, C74–C94, and C78–C96.

It belongs to the invertebrate defensin family. Type 1 subfamily.

The protein resides in the secreted. Its function is as follows. Antibacterial peptide mostly active against Gram-positive bacteria. This chain is Defensin-B (DEFB), found in Aedes aegypti (Yellowfever mosquito).